The chain runs to 293 residues: Diaminopimelate epimerase (293 aa).

The substrate site is built by N17, Q47, and N67. C76 acts as the Proton donor in catalysis. Substrate is bound by residues 77-78 (GN), N164, N197, and 215-216 (ER). C224 (proton acceptor) is an active-site residue. A substrate-binding site is contributed by 225-226 (GS).

Belongs to the diaminopimelate epimerase family. In terms of assembly, homodimer.

Its subcellular location is the cytoplasm. The enzyme catalyses (2S,6S)-2,6-diaminopimelate = meso-2,6-diaminopimelate. The protein operates within amino-acid biosynthesis; L-lysine biosynthesis via DAP pathway; DL-2,6-diaminopimelate from LL-2,6-diaminopimelate: step 1/1. In terms of biological role, catalyzes the stereoinversion of LL-2,6-diaminopimelate (L,L-DAP) to meso-diaminopimelate (meso-DAP), a precursor of L-lysine and an essential component of the bacterial peptidoglycan. This chain is Diaminopimelate epimerase, found in Rhodopseudomonas palustris (strain TIE-1).